Here is a 283-residue protein sequence, read N- to C-terminus: MAEITASLVKELRERTGAGMMDCKKALTEANGDIELAIENMRKSGAIKAAKKAGNVAADGVIKTKIDGNVAFILEVNCQTDFVAKDAGFQAFADKVLDAAVAGKITDVEVLKAQFEEERVALVAKIGENINIRRVASLEGDVLGSYQHGARIGVLVAAKGADEELVKQLAMHVAASKPEFVKPEDVSVDVVEKEYQVQLDIAMQSGKPKEIAEKMVEGRMKKFTGEVSLTGQPFVMEPSKSVGQLLKEHNADVTGFIRFEVGEGIEKVETDFAAEVAAMSKQS.

Positions 80–83 (TDFV) are involved in Mg(2+) ion dislocation from EF-Tu.

This sequence belongs to the EF-Ts family.

The protein resides in the cytoplasm. Its function is as follows. Associates with the EF-Tu.GDP complex and induces the exchange of GDP to GTP. It remains bound to the aminoacyl-tRNA.EF-Tu.GTP complex up to the GTP hydrolysis stage on the ribosome. The chain is Elongation factor Ts from Salmonella paratyphi A (strain ATCC 9150 / SARB42).